Reading from the N-terminus, the 291-residue chain is 4-diphosphocytidyl-2-C-methyl-D-erythritol kinase (291 aa).

Lys21 is an active-site residue. 104–114 (PMGGGLGGGSS) lines the ATP pocket. Asp146 is an active-site residue.

Belongs to the GHMP kinase family. IspE subfamily.

It catalyses the reaction 4-CDP-2-C-methyl-D-erythritol + ATP = 4-CDP-2-C-methyl-D-erythritol 2-phosphate + ADP + H(+). It functions in the pathway isoprenoid biosynthesis; isopentenyl diphosphate biosynthesis via DXP pathway; isopentenyl diphosphate from 1-deoxy-D-xylulose 5-phosphate: step 3/6. In terms of biological role, catalyzes the phosphorylation of the position 2 hydroxy group of 4-diphosphocytidyl-2C-methyl-D-erythritol. The sequence is that of 4-diphosphocytidyl-2-C-methyl-D-erythritol kinase from Methylococcus capsulatus (strain ATCC 33009 / NCIMB 11132 / Bath).